A 511-amino-acid chain; its full sequence is Cytochrome P450 4A7 (511 aa).

Positions 1 to 4 (MSVS) are excised as a propeptide. Residues Glu-322 and Cys-458 each contribute to the heme site.

Belongs to the cytochrome P450 family. The cofactor is heme. In terms of tissue distribution, liver, kidney, small intestine.

The protein resides in the endoplasmic reticulum membrane. It localises to the microsome membrane. The enzyme catalyses an omega-methyl-long-chain fatty acid + reduced [NADPH--hemoprotein reductase] + O2 = an omega-hydroxy-long-chain fatty acid + oxidized [NADPH--hemoprotein reductase] + H2O + H(+). Functionally, cytochromes P450 are a group of heme-thiolate monooxygenases. In liver microsomes, this enzyme is involved in an NADPH-dependent electron transport pathway. It oxidizes a variety of structurally unrelated compounds, including steroids, fatty acids, and xenobiotics. Its function is as follows. The kidney P-450 system is rather specialized for the omega-hydroxylation of fatty acids. Both P450-KA1 and P450-KA2 catalyze the omega- and (omega-1)-hydroxylation of various fatty acids with no drug-metabolizing activity, and hydroxylate prostaglandin A1 and A2 solely at the omega-position. This Oryctolagus cuniculus (Rabbit) protein is Cytochrome P450 4A7 (CYP4A7).